Consider the following 251-residue polypeptide: uncharacterized protein (251 aa).

This is an uncharacterized protein from Acanthamoeba polyphaga mimivirus (APMV).